A 674-amino-acid chain; its full sequence is Inactivation-no-after-potential D protein (674 aa).

In terms of domain architecture, PDZ 1 spans 17–106 (MVTLDKTGKK…KIELEIQTFD (90 aa)). The disordered stretch occupies residues 133 to 192 (QTTNNNASGGQGMGQGQGQGQGMAGMNRQQSMQKRNTTFTASMRQKHSNYADEDDEDTRD). Over residues 141–155 (GGQGMGQGQGQGQGM) the composition is skewed to gly residues. Residues 159–175 (NRQQSMQKRNTTFTASM) show a composition bias toward polar residues. PDZ domains follow at residues 249-332 (RIEV…TSRR) and 364-448 (ARTV…LTLK). The segment covering 458–475 (AAEEKKKEEAKKEEEKPQ) has biased composition (basic and acidic residues). Residues 458–481 (AAEEKKKEEAKKEEEKPQEPATAE) form a disordered region. PDZ domains follow at residues 489–577 (LIEL…RADP) and 584–664 (NVDL…TRPK). 2 positions are modified to phosphoserine: S598 and S600.

As to quaternary structure, interacts with the C-terminus of trp, and with norpA and inaC to form the inaD signaling complex. Interacts with Fkbp59, which together with trpl, rhodopsin and calmodulin may also be part of the inaD complex. In terms of processing, phosphorylated by inaC. As to expression, expressed in photoreceptor cells (R cells) of the compound eyes and ocelli.

The protein resides in the cell projection. It is found in the rhabdomere. Functionally, involved in the negative feedback regulation of the light-activated signaling cascade in photoreceptors through a calcium-mediated process. Interacts with tetrapeptide ligand located in C-terminal sequence of 3 key components of the visual cascade, tethering them and forming a macromolecular signaling phototransduction complex. The chain is Inactivation-no-after-potential D protein (inaD) from Drosophila melanogaster (Fruit fly).